The following is a 143-amino-acid chain: Root meristem growth factor 10 (143 aa).

Residues 1–27 (MDMLRSACFYFLLIVFVILSWSLLCDS) form the signal peptide. A propeptide spanning residues 28-130 (RHLGHMEKKL…SDQEHPGFNL (103 aa)) is cleaved from the precursor. Asn60 carries an N-linked (GlcNAc...) asparagine glycan. Polar residues predominate over residues 74–83 (NHGDNGQING). The segment at 74–143 (NHGDNGQING…QPTTHPPHHN (70 aa)) is disordered. The short motif at 92 to 99 (VKRASDKK) is the Nuclear localization signal element. Sulfotyrosine is present on Tyr132. Pro140 carries the hydroxyproline modification.

This sequence belongs to the RGF family. In terms of assembly, binds to LRR receptor-like serine/threonine-protein kinases RGI1, RGI2 and RGI3 to trigger their dimerization with SERK proteins and subsequent signaling. The tyrosine sulfation is critical for the function of the peptide. As to expression, expressed in root tips.

The protein resides in the secreted. The protein localises to the nucleus. In terms of biological role, maintains the postembryonic root stem cell niche by regulating the expression levels and patterns of the transcription factor PLETHORA (PLT), mainly at the post-transcriptional level. Promotes root elongation. This chain is Root meristem growth factor 10, found in Arabidopsis thaliana (Mouse-ear cress).